Reading from the N-terminus, the 2004-residue chain is Alpha-2-macroglobulin homolog (2004 aa).

The first 27 residues, 1 to 27, serve as a signal peptide directing secretion; the sequence is MLCCLVFKGLLSMDLLRFLLISPFALI.

Belongs to the protease inhibitor I39 (alpha-2-macroglobulin) family. Bacterial alpha-2-macroglobulin subfamily.

The chain is Alpha-2-macroglobulin homolog from Yersinia pestis.